We begin with the raw amino-acid sequence, 294 residues long: Cytidine deaminase (294 aa).

2 CMP/dCMP-type deaminase domains span residues 48-168 and 186-294; these read DEDA…FGPK and LTGD…VLLA. 89 to 91 is a binding site for substrate; that stretch reads NME. His102 contacts Zn(2+). Residue Glu104 is the Proton donor of the active site. The Zn(2+) site is built by Cys129 and Cys132.

It belongs to the cytidine and deoxycytidylate deaminase family. As to quaternary structure, homodimer. Zn(2+) serves as cofactor.

The enzyme catalyses cytidine + H2O + H(+) = uridine + NH4(+). It carries out the reaction 2'-deoxycytidine + H2O + H(+) = 2'-deoxyuridine + NH4(+). Its function is as follows. This enzyme scavenges exogenous and endogenous cytidine and 2'-deoxycytidine for UMP synthesis. This is Cytidine deaminase from Shigella dysenteriae serotype 1 (strain Sd197).